The following is a 142-amino-acid chain: Large ribosomal subunit protein uL13 (142 aa).

The protein belongs to the universal ribosomal protein uL13 family. In terms of assembly, part of the 50S ribosomal subunit.

This protein is one of the early assembly proteins of the 50S ribosomal subunit, although it is not seen to bind rRNA by itself. It is important during the early stages of 50S assembly. This Vibrio vulnificus (strain CMCP6) protein is Large ribosomal subunit protein uL13.